The sequence spans 308 residues: Aspartate carbamoyltransferase catalytic subunit (308 aa).

Arg58 and Thr59 together coordinate carbamoyl phosphate. Lys86 provides a ligand contact to L-aspartate. 3 residues coordinate carbamoyl phosphate: Arg108, His136, and Gln139. L-aspartate-binding residues include Arg169 and Arg227. Gly268 and Pro269 together coordinate carbamoyl phosphate.

It belongs to the aspartate/ornithine carbamoyltransferase superfamily. ATCase family. In terms of assembly, heterododecamer (2C3:3R2) of six catalytic PyrB chains organized as two trimers (C3), and six regulatory PyrI chains organized as three dimers (R2).

The catalysed reaction is carbamoyl phosphate + L-aspartate = N-carbamoyl-L-aspartate + phosphate + H(+). It participates in pyrimidine metabolism; UMP biosynthesis via de novo pathway; (S)-dihydroorotate from bicarbonate: step 2/3. Catalyzes the condensation of carbamoyl phosphate and aspartate to form carbamoyl aspartate and inorganic phosphate, the committed step in the de novo pyrimidine nucleotide biosynthesis pathway. The sequence is that of Aspartate carbamoyltransferase catalytic subunit from Chloroflexus aggregans (strain MD-66 / DSM 9485).